A 66-amino-acid chain; its full sequence is Large ribosomal subunit protein bL35 (66 aa).

2 stretches are compositionally biased toward basic residues: residues 1 to 16 (MPKMKTHRGAAKRVKR) and 38 to 49 (TKQKRQLRKARL). Positions 1-49 (MPKMKTHRGAAKRVKRTASGQLKRSRAFTSHLFANKSTKQKRQLRKARL) are disordered.

The protein belongs to the bacterial ribosomal protein bL35 family.

In Staphylococcus aureus (strain MSSA476), this protein is Large ribosomal subunit protein bL35.